The chain runs to 445 residues: Rab GDP dissociation inhibitor beta (445 aa).

Position 1 is an N-acetylmethionine (Met-1). At Lys-57 the chain carries N6-succinyllysine. Residue Lys-112 is modified to N6-acetyllysine. Ser-130 carries the post-translational modification Phosphoserine. An N6-acetyllysine modification is found at Lys-269. Ser-382 carries the phosphoserine modification.

It belongs to the Rab GDI family. In terms of assembly, interacts with RHOH. Interacts with the GDP-bound inactive forms of RAB3A, RAB3B, RAB3C, RAB5A, RAB5B, RAB5C, RAB8A, RAB8B, RAB10, RAB12, RAB35, and RAB43; binds RAB3D to a lesser extent. Interacts with DZIP1; this interaction negatively regulates the interaction of GDI2 with GDP-bound RAB8A.

The protein localises to the cytoplasm. It is found in the membrane. It localises to the golgi apparatus. Its subcellular location is the trans-Golgi network. Its function is as follows. GDP-dissociation inhibitor preventing the GDP to GTP exchange of most Rab proteins. By keeping these small GTPases in their inactive GDP-bound form regulates intracellular membrane trafficking. Negatively regulates protein transport to the cilium and ciliogenesis through the inhibition of RAB8A. The chain is Rab GDP dissociation inhibitor beta (GDI2) from Canis lupus familiaris (Dog).